The sequence spans 345 residues: Probable S-adenosylmethionine carrier 2, chloroplastic (345 aa).

A chloroplast-targeting transit peptide spans 1–31 (MTKALSGFCCSLSLSTLVRSSSSHMDSDIVS). Solcar repeat units follow at residues 76–148 (RVLY…TKQK), 157–239 (LSAV…LRIG), and 252–334 (ENAM…TKQI). The next 5 helical transmembrane spans lie at 82-102 (LITG…IDTI), 121-141 (YSGL…FFGV), 156-176 (NLSA…SSIV), 254-274 (AMIG…LDVI), and 309-329 (GMGP…GVLE).

It belongs to the mitochondrial carrier (TC 2.A.29) family. In terms of tissue distribution, expressed at low levels in seedlings, leaves, flowers, stems and roots.

The protein resides in the plastid. Its subcellular location is the chloroplast membrane. Probable S-adenosylmethionine (SAM) transporter able to catalyze both uniport and exchange reactions through membranes. In Arabidopsis thaliana (Mouse-ear cress), this protein is Probable S-adenosylmethionine carrier 2, chloroplastic (SAMC2).